Reading from the N-terminus, the 242-residue chain is Glucosamine-6-phosphate deaminase (242 aa).

The active-site Proton acceptor; for enolization step is the D67. Residue N136 is the For ring-opening step of the active site. The active-site Proton acceptor; for ring-opening step is the H138. Residue E143 is the For ring-opening step of the active site.

Belongs to the glucosamine/galactosamine-6-phosphate isomerase family. NagB subfamily.

It catalyses the reaction alpha-D-glucosamine 6-phosphate + H2O = beta-D-fructose 6-phosphate + NH4(+). It participates in amino-sugar metabolism; N-acetylneuraminate degradation; D-fructose 6-phosphate from N-acetylneuraminate: step 5/5. In terms of biological role, catalyzes the reversible isomerization-deamination of glucosamine 6-phosphate (GlcN6P) to form fructose 6-phosphate (Fru6P) and ammonium ion. The chain is Glucosamine-6-phosphate deaminase from Clostridium beijerinckii (strain ATCC 51743 / NCIMB 8052) (Clostridium acetobutylicum).